The sequence spans 345 residues: MDDNKKKSLDLALKQIDKAFGKGTVLRLGDKEIEPIDSISSGSIGLDIALGIGGVPKGRIVEIYGPESSGKTTLTLHLIAESQKVGGVCAFVDAEHALDVKYAKNLGVDTDNLYISQPDFGEQALDIVETLARSGAVDLIVIDSVAALTPKSEIEGDMGDQHVGLQARLMSQALRKLTGVVHKMGTTVVFINQIRMKIGAMGYGTPETTTGGNALKFYASVRLDVRKIATLKQSDEPIGNRVKVKVVKNKVAPPFRQAEFDIMFGEGISKEGEIIDYGVKLDIIDKSGAWFSYDNSKLGQGRENSKAFLKENKAIADEITEKIRANMGDSIMSGAVDEEEMEGDE.

65–72 (GPESSGKT) provides a ligand contact to ATP.

This sequence belongs to the RecA family.

The protein localises to the cytoplasm. Its function is as follows. Can catalyze the hydrolysis of ATP in the presence of single-stranded DNA, the ATP-dependent uptake of single-stranded DNA by duplex DNA, and the ATP-dependent hybridization of homologous single-stranded DNAs. It interacts with LexA causing its activation and leading to its autocatalytic cleavage. The chain is Protein RecA from Campylobacter fetus subsp. fetus (strain 82-40).